Reading from the N-terminus, the 301-residue chain is tRNA pseudouridine synthase B (301 aa).

The active-site Nucleophile is Asp-38.

The protein belongs to the pseudouridine synthase TruB family. Type 1 subfamily.

It catalyses the reaction uridine(55) in tRNA = pseudouridine(55) in tRNA. In terms of biological role, responsible for synthesis of pseudouridine from uracil-55 in the psi GC loop of transfer RNAs. This chain is tRNA pseudouridine synthase B, found in Ehrlichia canis (strain Jake).